Consider the following 440-residue polypeptide: Probable exopolygalacturonase C (440 aa).

The signal sequence occupies residues 1–21 (MLITNPALLGILASLAPLALG). N-linked (GlcNAc...) asparagine glycans are attached at residues Asn24, Asn84, Asn151, and Asn219. PbH1 repeat units lie at residues 217–238 (GTNI…AVNT) and 240–261 (SHNI…SIGS). Catalysis depends on Asp231, which acts as the Proton donor. His255 is a catalytic residue. Asn271 is a glycosylation site (N-linked (GlcNAc...) asparagine). The PbH1 3 repeat unit spans residues 272–293 (ITNLRFEDVTVIDALYAARFKS). Residues Asn313 and Asn350 are each glycosylated (N-linked (GlcNAc...) asparagine). A disulfide bridge links Cys389 with Cys395. Residue Asn434 is glycosylated (N-linked (GlcNAc...) asparagine).

This sequence belongs to the glycosyl hydrolase 28 family.

It is found in the secreted. The enzyme catalyses [(1-&gt;4)-alpha-D-galacturonosyl](n) + H2O = alpha-D-galacturonate + [(1-&gt;4)-alpha-D-galacturonosyl](n-1). Functionally, specific in hydrolyzing the terminal glycosidic bond of polygalacturonic acid and oligogalacturonates. This is Probable exopolygalacturonase C (pgxC) from Neosartorya fischeri (strain ATCC 1020 / DSM 3700 / CBS 544.65 / FGSC A1164 / JCM 1740 / NRRL 181 / WB 181) (Aspergillus fischerianus).